A 93-amino-acid polypeptide reads, in one-letter code: Small ribosomal subunit protein uS19 (93 aa).

This sequence belongs to the universal ribosomal protein uS19 family.

Functionally, protein S19 forms a complex with S13 that binds strongly to the 16S ribosomal RNA. This chain is Small ribosomal subunit protein uS19, found in Nocardia farcinica (strain IFM 10152).